Reading from the N-terminus, the 241-residue chain is Carboxy-S-adenosyl-L-methionine synthase (241 aa).

S-adenosyl-L-methionine contacts are provided by residues Tyr38, 63-65, 88-89, 116-117, Asn131, and Arg198; these read GCS, DN, and DI.

This sequence belongs to the class I-like SAM-binding methyltransferase superfamily. Cx-SAM synthase family. Homodimer.

The enzyme catalyses prephenate + S-adenosyl-L-methionine = carboxy-S-adenosyl-L-methionine + 3-phenylpyruvate + H2O. Its function is as follows. Catalyzes the conversion of S-adenosyl-L-methionine (SAM) to carboxy-S-adenosyl-L-methionine (Cx-SAM). The chain is Carboxy-S-adenosyl-L-methionine synthase from Haemophilus influenzae (strain PittEE).